Here is a 150-residue protein sequence, read N- to C-terminus: SsrA-binding protein (150 aa).

The tract at residues 127 to 150 (KRETEKQRDWQREKARIMKGDAKD) is disordered.

The protein belongs to the SmpB family.

It localises to the cytoplasm. Required for rescue of stalled ribosomes mediated by trans-translation. Binds to transfer-messenger RNA (tmRNA), required for stable association of tmRNA with ribosomes. tmRNA and SmpB together mimic tRNA shape, replacing the anticodon stem-loop with SmpB. tmRNA is encoded by the ssrA gene; the 2 termini fold to resemble tRNA(Ala) and it encodes a 'tag peptide', a short internal open reading frame. During trans-translation Ala-aminoacylated tmRNA acts like a tRNA, entering the A-site of stalled ribosomes, displacing the stalled mRNA. The ribosome then switches to translate the ORF on the tmRNA; the nascent peptide is terminated with the 'tag peptide' encoded by the tmRNA and targeted for degradation. The ribosome is freed to recommence translation, which seems to be the essential function of trans-translation. The sequence is that of SsrA-binding protein from Cupriavidus necator (strain ATCC 17699 / DSM 428 / KCTC 22496 / NCIMB 10442 / H16 / Stanier 337) (Ralstonia eutropha).